The following is a 359-amino-acid chain: Peptide chain release factor 1 (359 aa).

At glutamine 236 the chain carries N5-methylglutamine.

The protein belongs to the prokaryotic/mitochondrial release factor family. Post-translationally, methylated by PrmC. Methylation increases the termination efficiency of RF1.

Its subcellular location is the cytoplasm. Peptide chain release factor 1 directs the termination of translation in response to the peptide chain termination codons UAG and UAA. This is Peptide chain release factor 1 from Streptococcus pneumoniae serotype 4 (strain ATCC BAA-334 / TIGR4).